The chain runs to 104 residues: Large ribosomal subunit protein uL24 (104 aa).

The interval isoleucine 41 to lysine 61 is disordered.

Belongs to the universal ribosomal protein uL24 family. As to quaternary structure, part of the 50S ribosomal subunit.

Its function is as follows. One of two assembly initiator proteins, it binds directly to the 5'-end of the 23S rRNA, where it nucleates assembly of the 50S subunit. In terms of biological role, one of the proteins that surrounds the polypeptide exit tunnel on the outside of the subunit. In Wigglesworthia glossinidia brevipalpis, this protein is Large ribosomal subunit protein uL24.